The primary structure comprises 215 residues: Peroxiredoxin 1 (215 aa).

Positions Val2–Val158 constitute a Thioredoxin domain. Cys46 serves as the catalytic Cysteine sulfenic acid (-SOH) intermediate. Arg121 contacts substrate.

Belongs to the peroxiredoxin family. Prx6 subfamily. In terms of assembly, homodecamer. Pentamer of dimers that assemble into a ring structure.

Its subcellular location is the cytoplasm. The catalysed reaction is a hydroperoxide + [thioredoxin]-dithiol = an alcohol + [thioredoxin]-disulfide + H2O. In terms of biological role, thiol-specific peroxidase that catalyzes the reduction of hydrogen peroxide and organic hydroperoxides to water and alcohols, respectively. Plays a role in cell protection against oxidative stress by detoxifying peroxides. This chain is Peroxiredoxin 1, found in Sulfurisphaera tokodaii (strain DSM 16993 / JCM 10545 / NBRC 100140 / 7) (Sulfolobus tokodaii).